Consider the following 852-residue polypeptide: Replication factor C small subunit (852 aa).

Residues 183-306 (WLGYFMGSGY…IAYALASFGI (124 aa)) form the DOD-type homing endonuclease domain.

This sequence belongs to the activator 1 small subunits family. RfcS subfamily. As to quaternary structure, heteromultimer composed of three to four small subunits (RfcS) and one to two large subunits (RfcL). Post-translationally, this protein undergoes a protein self splicing that involves a post-translational excision of the intervening region (intein) followed by peptide ligation.

Functionally, part of the RFC clamp loader complex which loads the PCNA sliding clamp onto DNA. The complex possesses DNA-dependent ATPase activity which is further stimulated by PCNA. The protein is Replication factor C small subunit (rfcS) of Pyrococcus furiosus (strain ATCC 43587 / DSM 3638 / JCM 8422 / Vc1).